A 571-amino-acid chain; its full sequence is Phosphoribosylaminoimidazole carboxylase (571 aa).

The residue at position 37 (Ser37) is a Phosphoserine. Residues 110–298 (KEHLIKNGIA…QFEAHLRSIL (189 aa)) enclose the ATP-grasp domain. 138–193 (GRDLGFPFVLKSRTLAYDGRGNFVVKNKEMIPEALEVLKDRPLYAEKWAPFTKELA) contacts ATP.

This sequence in the C-terminal section; belongs to the AIR carboxylase family. Class I subfamily.

It carries out the reaction 5-amino-1-(5-phospho-D-ribosyl)imidazole-4-carboxylate + H(+) = 5-amino-1-(5-phospho-beta-D-ribosyl)imidazole + CO2. The protein operates within purine metabolism; IMP biosynthesis via de novo pathway; 5-amino-1-(5-phospho-D-ribosyl)imidazole-4-carboxylate from 5-amino-1-(5-phospho-D-ribosyl)imidazole (carboxylase route): step 1/1. In Saccharomyces cerevisiae (strain ATCC 204508 / S288c) (Baker's yeast), this protein is Phosphoribosylaminoimidazole carboxylase (ADE2).